A 281-amino-acid chain; its full sequence is Elongation factor Ts (281 aa).

The interval 80–83 (TDFV) is involved in Mg(2+) ion dislocation from EF-Tu.

It belongs to the EF-Ts family.

Its subcellular location is the cytoplasm. Associates with the EF-Tu.GDP complex and induces the exchange of GDP to GTP. It remains bound to the aminoacyl-tRNA.EF-Tu.GTP complex up to the GTP hydrolysis stage on the ribosome. The chain is Elongation factor Ts from Vibrio parahaemolyticus serotype O3:K6 (strain RIMD 2210633).